Consider the following 261-residue polypeptide: Cytochrome c oxidase subunit 3 (261 aa).

At 1 to 15 (MTHQTHAYHMVDPSP) the chain is on the mitochondrial matrix side. Residues 16-34 (WPLTGALSALLMTSGLTMW) form a helical membrane-spanning segment. Topologically, residues 35–40 (FHYHSV) are mitochondrial intermembrane. The chain crosses the membrane as a helical span at residues 41–66 (VLLFLGLMTNTLTMFQWWRDVVREGT). At 67–72 (FQGHHT) the chain is on the mitochondrial matrix side. A helical transmembrane segment spans residues 73 to 105 (PVVQEGLRYGMILFITSEVLFFTGFFWAFYHSS). The Mitochondrial intermembrane segment spans residues 106–128 (LAPTPELGSYWPPVGVYPLNPLE). Residues 129 to 152 (VPLLNTSVLLASGVTITWAHHSLM) traverse the membrane as a helical segment. The Mitochondrial matrix portion of the chain corresponds to 153–155 (EGN). Residues 156–183 (RKNMLQALLITILLGVYFTLLQMFEYYE) form a helical membrane-spanning segment. Residues 184–190 (ASFTISD) lie on the Mitochondrial intermembrane side of the membrane. The helical transmembrane segment at 191-223 (GIYGSTFFVTTGFHGLHVIIGSTFLLTCFIRQL) threads the bilayer. Residues 224–232 (KFHFTSNHH) are Mitochondrial matrix-facing. A helical membrane pass occupies residues 233–256 (FGFEAAAWYWHFVDVVWLFLYLSI). Topologically, residues 257-261 (YWWGS) are mitochondrial intermembrane.

Belongs to the cytochrome c oxidase subunit 3 family. As to quaternary structure, component of the cytochrome c oxidase (complex IV, CIV), a multisubunit enzyme composed of 14 subunits. The complex is composed of a catalytic core of 3 subunits MT-CO1, MT-CO2 and MT-CO3, encoded in the mitochondrial DNA, and 11 supernumerary subunits COX4I, COX5A, COX5B, COX6A, COX6B, COX6C, COX7A, COX7B, COX7C, COX8 and NDUFA4, which are encoded in the nuclear genome. The complex exists as a monomer or a dimer and forms supercomplexes (SCs) in the inner mitochondrial membrane with NADH-ubiquinone oxidoreductase (complex I, CI) and ubiquinol-cytochrome c oxidoreductase (cytochrome b-c1 complex, complex III, CIII), resulting in different assemblies (supercomplex SCI(1)III(2)IV(1) and megacomplex MCI(2)III(2)IV(2)).

It is found in the mitochondrion inner membrane. It catalyses the reaction 4 Fe(II)-[cytochrome c] + O2 + 8 H(+)(in) = 4 Fe(III)-[cytochrome c] + 2 H2O + 4 H(+)(out). In terms of biological role, component of the cytochrome c oxidase, the last enzyme in the mitochondrial electron transport chain which drives oxidative phosphorylation. The respiratory chain contains 3 multisubunit complexes succinate dehydrogenase (complex II, CII), ubiquinol-cytochrome c oxidoreductase (cytochrome b-c1 complex, complex III, CIII) and cytochrome c oxidase (complex IV, CIV), that cooperate to transfer electrons derived from NADH and succinate to molecular oxygen, creating an electrochemical gradient over the inner membrane that drives transmembrane transport and the ATP synthase. Cytochrome c oxidase is the component of the respiratory chain that catalyzes the reduction of oxygen to water. Electrons originating from reduced cytochrome c in the intermembrane space (IMS) are transferred via the dinuclear copper A center (CU(A)) of subunit 2 and heme A of subunit 1 to the active site in subunit 1, a binuclear center (BNC) formed by heme A3 and copper B (CU(B)). The BNC reduces molecular oxygen to 2 water molecules using 4 electrons from cytochrome c in the IMS and 4 protons from the mitochondrial matrix. The polypeptide is Cytochrome c oxidase subunit 3 (MT-CO3) (Mammuthus primigenius (Siberian woolly mammoth)).